Here is a 246-residue protein sequence, read N- to C-terminus: UDP-N-acetyl-D-mannosaminuronic acid transferase (246 aa).

It belongs to the glycosyltransferase 26 family.

It catalyses the reaction UDP-N-acetyl-alpha-D-mannosaminouronate + N-acetyl-alpha-D-glucosaminyl-di-trans,octa-cis-undecaprenyl diphosphate = beta-D-ManNAcA-(1-&gt;4)-alpha-D-GlcNAc-di-trans,octa-cis-undecaprenyl diphosphate + UDP + H(+). It participates in bacterial outer membrane biogenesis; enterobacterial common antigen biosynthesis. In terms of biological role, catalyzes the synthesis of Und-PP-GlcNAc-ManNAcA (Lipid II), the second lipid-linked intermediate involved in enterobacterial common antigen (ECA) synthesis. The protein is UDP-N-acetyl-D-mannosaminuronic acid transferase of Escherichia coli O1:K1 / APEC.